The primary structure comprises 339 residues: Inositol 2-dehydrogenase 2 (339 aa).

This sequence belongs to the Gfo/Idh/MocA family. As to quaternary structure, homotetramer.

It carries out the reaction myo-inositol + NAD(+) = scyllo-inosose + NADH + H(+). Involved in the oxidation of myo-inositol (MI) to 2-keto-myo-inositol (2KMI or 2-inosose). The polypeptide is Inositol 2-dehydrogenase 2 (Saccharopolyspora erythraea (strain ATCC 11635 / DSM 40517 / JCM 4748 / NBRC 13426 / NCIMB 8594 / NRRL 2338)).